The chain runs to 39 residues: Cytochrome b6-f complex subunit 5 (39 aa).

The chain crosses the membrane as a helical span at residues 5 to 25 (LLCGIVLGLVPITIVGLFVSA).

This sequence belongs to the PetG family. In terms of assembly, the 4 large subunits of the cytochrome b6-f complex are cytochrome b6, subunit IV (17 kDa polypeptide, PetD), cytochrome f and the Rieske protein, while the 4 small subunits are PetG, PetL, PetM and PetN. The complex functions as a dimer.

Its subcellular location is the cellular thylakoid membrane. Its function is as follows. Component of the cytochrome b6-f complex, which mediates electron transfer between photosystem II (PSII) and photosystem I (PSI), cyclic electron flow around PSI, and state transitions. PetG is required for either the stability or assembly of the cytochrome b6-f complex. This Prochlorococcus marinus (strain MIT 9211) protein is Cytochrome b6-f complex subunit 5.